The chain runs to 163 residues: Epididymal-specific lipocalin-6 (163 aa).

Residues 1-20 (MGGLLLAAFLALVSVPRAQA) form the signal peptide.

Belongs to the calycin superfamily. Lipocalin family. Predominantly expressed in epididymis.

Its subcellular location is the secreted. May play a role in male fertility. This chain is Epididymal-specific lipocalin-6 (LCN6), found in Homo sapiens (Human).